Reading from the N-terminus, the 420-residue chain is DNA replication and repair protein RecF (420 aa).

30 to 37 provides a ligand contact to ATP; it reads GRNGQGKT. The tract at residues 175–214 is disordered; it reads RKGGFARKGGFAPLGPPEGRPEGPPEGRTGGSATSGPPSR.

It belongs to the RecF family.

It is found in the cytoplasm. In terms of biological role, the RecF protein is involved in DNA metabolism; it is required for DNA replication and normal SOS inducibility. RecF binds preferentially to single-stranded, linear DNA. It also seems to bind ATP. This Nocardioides sp. (strain ATCC BAA-499 / JS614) protein is DNA replication and repair protein RecF.